A 415-amino-acid chain; its full sequence is WD repeat and FYVE domain-containing protein 2 (415 aa).

WD repeat units lie at residues histidine 71–serine 103, cysteine 119–histidine 148, alanine 202–aspartate 232, and glycine 245–proline 284. An FYVE-type zinc finger spans residues tryptophan 286–lysine 357. Zn(2+)-binding residues include cysteine 292, cysteine 295, cysteine 319, cysteine 322, cysteine 327, cysteine 330, cysteine 349, and cysteine 352. The stretch at glutamate 373–aspartate 403 is one WD 5 repeat.

Its function is as follows. Plays a role in coelomocyte endocytosis. In Caenorhabditis elegans, this protein is WD repeat and FYVE domain-containing protein 2 (wdfy-2).